The following is a 206-amino-acid chain: Ribosomal RNA small subunit methyltransferase G (206 aa).

S-adenosyl-L-methionine contacts are provided by residues Gly74, Leu79, 125–126 (VE), and Arg140.

It belongs to the methyltransferase superfamily. RNA methyltransferase RsmG family.

It localises to the cytoplasm. It carries out the reaction guanosine(527) in 16S rRNA + S-adenosyl-L-methionine = N(7)-methylguanosine(527) in 16S rRNA + S-adenosyl-L-homocysteine. Functionally, specifically methylates the N7 position of guanine in position 527 of 16S rRNA. The polypeptide is Ribosomal RNA small subunit methyltransferase G (Shewanella sp. (strain MR-4)).